Here is a 179-residue protein sequence, read N- to C-terminus: ATP synthase subunit delta (179 aa).

The protein belongs to the ATPase delta chain family. F-type ATPases have 2 components, F(1) - the catalytic core - and F(0) - the membrane proton channel. F(1) has five subunits: alpha(3), beta(3), gamma(1), delta(1), epsilon(1). F(0) has three main subunits: a(1), b(2) and c(10-14). The alpha and beta chains form an alternating ring which encloses part of the gamma chain. F(1) is attached to F(0) by a central stalk formed by the gamma and epsilon chains, while a peripheral stalk is formed by the delta and b chains.

It is found in the cell membrane. F(1)F(0) ATP synthase produces ATP from ADP in the presence of a proton or sodium gradient. F-type ATPases consist of two structural domains, F(1) containing the extramembraneous catalytic core and F(0) containing the membrane proton channel, linked together by a central stalk and a peripheral stalk. During catalysis, ATP synthesis in the catalytic domain of F(1) is coupled via a rotary mechanism of the central stalk subunits to proton translocation. Its function is as follows. This protein is part of the stalk that links CF(0) to CF(1). It either transmits conformational changes from CF(0) to CF(1) or is implicated in proton conduction. This chain is ATP synthase subunit delta, found in Staphylococcus saprophyticus subsp. saprophyticus (strain ATCC 15305 / DSM 20229 / NCIMB 8711 / NCTC 7292 / S-41).